The sequence spans 163 residues: Single-stranded DNA-binding protein 2 (163 aa).

In terms of domain architecture, SSB spans M1–E104. Positions R109 to F163 are disordered. Positions G119–S130 are enriched in low complexity. The segment covering Y131–N140 has biased composition (polar residues). An Important for interaction with partner proteins motif is present at residues D158–F163.

As to quaternary structure, homotetramer.

In terms of biological role, plays an important role in DNA replication, recombination and repair. Binds to ssDNA and to an array of partner proteins to recruit them to their sites of action during DNA metabolism. The polypeptide is Single-stranded DNA-binding protein 2 (ssb2) (Streptococcus pyogenes serotype M18 (strain MGAS8232)).